Here is a 191-residue protein sequence, read N- to C-terminus: MAEPLLVVGLGNPGANYARTRHNLGFVVADLLAARLGAKFKAHKRSGAEVATGRSAGRSLVLAKPRCYMNESGRQIGPLAKFYSVAPANIIVIHDDLDLEFGRIRLKIGGGEGGHNGLRSVVAALGTKDFQRVRIGIGRPPGRKDPAAFVLENFTPAERAEVPTICEQAADATELLIEQGMEPAQNRVHAW.

A tRNA-binding site is contributed by Tyr-17. The active-site Proton acceptor is the His-22. TRNA is bound by residues Tyr-68, Asn-70, and Asn-116.

The protein belongs to the PTH family. Monomer.

The protein localises to the cytoplasm. It carries out the reaction an N-acyl-L-alpha-aminoacyl-tRNA + H2O = an N-acyl-L-amino acid + a tRNA + H(+). Hydrolyzes ribosome-free peptidyl-tRNAs (with 1 or more amino acids incorporated), which drop off the ribosome during protein synthesis, or as a result of ribosome stalling. In terms of biological role, catalyzes the release of premature peptidyl moieties from peptidyl-tRNA molecules trapped in stalled 50S ribosomal subunits, and thus maintains levels of free tRNAs and 50S ribosomes. The sequence is that of Peptidyl-tRNA hydrolase from Mycobacterium tuberculosis (strain ATCC 25177 / H37Ra).